A 545-amino-acid polypeptide reads, in one-letter code: T-complex protein 1 subunit gamma (545 aa).

M1 is subject to N-acetylmethionine. The disordered stretch occupies residues 1-24; that stretch reads MMGHRPVLVLSQNTKRESGRKVQS. Phosphoserine is present on S11. Residue K15 forms a Glycyl lysine isopeptide (Lys-Gly) (interchain with G-Cter in SUMO2) linkage. ADP is bound by residues G42, G94, T95, T96, S97, T162, and K163. Residues G42, G94, T95, and T96 each contribute to the ATP site. S170 bears the Phosphoserine mark. Residue K222 is modified to N6-acetyllysine. S243 and S244 each carry phosphoserine. A Phosphotyrosine modification is found at Y247. Residues K248 and K249 each participate in a glycyl lysine isopeptide (Lys-Gly) (interchain with G-Cter in SUMO2) cross-link. S252 bears the Phosphoserine mark. C366 and C372 form a disulfide bridge. Residue K381 forms a Glycyl lysine isopeptide (Lys-Gly) (interchain with G-Cter in SUMO2) linkage. ADP is bound at residue G411. G411 contacts ATP. Residues T430 and T459 each carry the phosphothreonine modification. 4 residues coordinate ADP: G482, E483, E497, and K502. ATP is bound at residue G482. E497 is a binding site for ATP. A disordered region spans residues 526-545; it reads HKKKGDDQSRQGGAPDAGQE.

The protein belongs to the TCP-1 chaperonin family. Component of the chaperonin-containing T-complex (TRiC), a hexadecamer composed of two identical back-to-back stacked rings enclosing a protein folding chamber. Each ring is made up of eight different subunits: TCP1/CCT1, CCT2, CCT3, CCT4, CCT5, CCT6A/CCT6, CCT7, CCT8. Interacts with PACRG. Interacts with DNAAF4. Interacts with DLEC1.

Its subcellular location is the cytoplasm. It carries out the reaction ATP + H2O = ADP + phosphate + H(+). Its function is as follows. Component of the chaperonin-containing T-complex (TRiC), a molecular chaperone complex that assists the folding of actin, tubulin and other proteins upon ATP hydrolysis. The TRiC complex mediates the folding of WRAP53/TCAB1, thereby regulating telomere maintenance. As part of the TRiC complex may play a role in the assembly of BBSome, a complex involved in ciliogenesis regulating transports vesicles to the cilia. The sequence is that of T-complex protein 1 subunit gamma (CCT3) from Macaca fascicularis (Crab-eating macaque).